The chain runs to 542 residues: Organic anion transporter 3 (542 aa).

The Cytoplasmic portion of the chain corresponds to 1-20; that stretch reads MTFSEILDRVGSMGRFQFLH. S4 is modified (phosphoserine). A helical membrane pass occupies residues 21-41; the sequence is VAILGLPILNMANHNLLQIFT. Topologically, residues 42–123 are extracellular; sequence AATPVHHCRP…LVCNSNKLKE (82 aa). N86 carries an N-linked (GlcNAc...) asparagine glycan. Residues 124–144 form a helical membrane-spanning segment; it reads MAQSIFMAGILIGGLVLGDLS. At 145–154 the chain is on the cytoplasmic side; the sequence is DRFGRRPILT. A helical transmembrane segment spans residues 155–175; the sequence is CSYLLLAASGSGAAFSPTFPI. A topological domain (extracellular) is located at residue Y176. Residues 177 to 197 traverse the membrane as a helical segment; sequence MVFRFLCGFGISGITLSTVIL. Residues 198–212 are Cytoplasmic-facing; that stretch reads NVEWVPTRMRAIMST. A helical transmembrane segment spans residues 213–233; sequence ALGYCYTFGQFILPGLAYAIP. The Extracellular segment spans residues 234 to 236; it reads QWR. A helical membrane pass occupies residues 237–257; that stretch reads WLQLTVSIPFFIFFLSSWWTP. Topologically, residues 258 to 327 are cytoplasmic; the sequence is ESIRWLVLSG…FRIPMLRRMT (70 aa). Residues 328-348 traverse the membrane as a helical segment; the sequence is FCLSLAWFATGFAYYSLAMGV. Residues 349–354 are Extracellular-facing; it reads EEFGVN. A helical transmembrane segment spans residues 355 to 375; sequence LYILQIIFGGVDVPAKFITIL. The Cytoplasmic portion of the chain corresponds to 376 to 386; it reads SLSYLGRHTTQ. The chain crosses the membrane as a helical span at residues 387–407; that stretch reads AAALLLAGGAILALTFVPLDL. At 408-471 the chain is on the extracellular side; that stretch reads QTVRTVLAVF…LVKITGEVQP (64 aa). A helical membrane pass occupies residues 472 to 492; that stretch reads FIPNIIYGITALLGGSAAFFL. At 493 to 542 the chain is on the cytoplasmic side; that stretch reads PETLNQPLPETIEDLENWSLRAKKPKQEPEVEKASQRIPLQPHGPGLGSS. Positions 515-542 are disordered; it reads KKPKQEPEVEKASQRIPLQPHGPGLGSS. Residues 517–527 show a composition bias toward basic and acidic residues; it reads PKQEPEVEKAS.

Belongs to the major facilitator (TC 2.A.1) superfamily. Organic cation transporter (TC 2.A.1.19) family.

The protein localises to the basolateral cell membrane. It catalyses the reaction estrone 3-sulfate(out) + glutarate(in) = estrone 3-sulfate(in) + glutarate(out). It carries out the reaction estrone 3-sulfate(in) + 2-oxoglutarate(out) = estrone 3-sulfate(out) + 2-oxoglutarate(in). The catalysed reaction is glutarate(in) + 2-oxoglutarate(out) = glutarate(out) + 2-oxoglutarate(in). The enzyme catalyses urate(in) + 2-oxoglutarate(out) = urate(out) + 2-oxoglutarate(in). It catalyses the reaction taurocholate(out) + glutarate(in) = taurocholate(in) + glutarate(out). It carries out the reaction dehydroepiandrosterone 3-sulfate(out) + glutarate(in) = dehydroepiandrosterone 3-sulfate(in) + glutarate(out). The catalysed reaction is prostaglandin F2alpha(out) + glutarate(in) = prostaglandin F2alpha(in) + glutarate(out). The enzyme catalyses prostaglandin F2alpha(out) + 2-oxoglutarate(in) = prostaglandin F2alpha(in) + 2-oxoglutarate(out). It catalyses the reaction (R)-carnitine(out) + 2-oxoglutarate(in) = (R)-carnitine(in) + 2-oxoglutarate(out). It carries out the reaction glutarate(in) + (R)-carnitine(out) = glutarate(out) + (R)-carnitine(in). The catalysed reaction is prostaglandin E2(out) + 2-oxoglutarate(in) = prostaglandin E2(in) + 2-oxoglutarate(out). The enzyme catalyses prostaglandin E2(out) + glutarate(in) = prostaglandin E2(in) + glutarate(out). It catalyses the reaction urate(in) + glutarate(out) = urate(out) + glutarate(in). It carries out the reaction taurocholate(out) + 2-oxoglutarate(in) = taurocholate(in) + 2-oxoglutarate(out). The catalysed reaction is dehydroepiandrosterone 3-sulfate(out) + 2-oxoglutarate(in) = dehydroepiandrosterone 3-sulfate(in) + 2-oxoglutarate(out). The enzyme catalyses kynurenate(out) + a dicarboxylate(in) = kynurenate(in) + a dicarboxylate(out). It catalyses the reaction (indol-3-yl)acetate(out) + a dicarboxylate(in) = (indol-3-yl)acetate(in) + a dicarboxylate(out). It carries out the reaction indoxyl sulfate(out) + a dicarboxylate(in) = indoxyl sulfate(in) + a dicarboxylate(out). The catalysed reaction is N-benzoylglycine(out) + a dicarboxylate(in) = N-benzoylglycine(in) + a dicarboxylate(out). The enzyme catalyses 3-carboxy-4-methyl-5-propyl-2-furanpropanoate(out) + a dicarboxylate(in) = 3-carboxy-4-methyl-5-propyl-2-furanpropanoate(in) + a dicarboxylate(out). It catalyses the reaction (6R)-L-erythro-5,6,7,8-tetrahydrobiopterin(out) + a dicarboxylate(in) = (6R)-L-erythro-5,6,7,8-tetrahydrobiopterin(in) + a dicarboxylate(out). It carries out the reaction L-erythro-7,8-dihydrobiopterin(out) + a dicarboxylate(in) = L-erythro-7,8-dihydrobiopterin(in) + a dicarboxylate(out). The catalysed reaction is L-sepiapterin(out) + a dicarboxylate(in) = L-sepiapterin(in) + a dicarboxylate(out). Functionally, functions as an organic anion/dicarboxylate exchanger that couples organic anion uptake indirectly to the sodium gradient. Transports organic anions such as estrone 3-sulfate (E1S) and urate in exchange for dicarboxylates such as glutarate or ketoglutarate (2-oxoglutarate). Plays an important role in the excretion of endogenous and exogenous organic anions, especially from the kidney and the brain. E1S transport is pH- and chloride-dependent and may also involve E1S/cGMP exchange. Responsible for the transport of prostaglandin E2 (PGE2) and prostaglandin F2(alpha) (PGF2(alpha)) in the basolateral side of the renal tubule. Involved in the transport of neuroactive tryptophan metabolites kynurenate and xanthurenate. Functions as a biopterin transporters involved in the uptake and the secretion of coenzymes tetrahydrobiopterin (BH4), dihydrobiopterin (BH2) and sepiapterin to urine, thereby determining baseline levels of blood biopterins. May be involved in the basolateral transport of steviol, a metabolite of the popular sugar substitute stevioside. May participate in the detoxification/ renal excretion of drugs and xenobiotics, such as the histamine H(2)-receptor antagonists fexofenadine and cimetidine, the antibiotic benzylpenicillin (PCG), the anionic herbicide 2,4-dichloro-phenoxyacetate (2,4-D), the diagnostic agent p-aminohippurate (PAH), the antiviral acyclovir (ACV), and the mycotoxin ochratoxin (OTA), by transporting these exogenous organic anions across the cell membrane in exchange for dicarboxylates such as 2-oxoglutarate. Contributes to the renal uptake of potent uremic toxins (indoxyl sulfate (IS), indole acetate (IA), hippurate/N-benzoylglycine (HA) and 3-carboxy-4-methyl-5-propyl-2-furanpropionate (CMPF)), pravastatin, PCG, E1S and dehydroepiandrosterone sulfate (DHEAS), and is partly involved in the renal uptake of temocaprilat (an angiotensin-converting enzyme (ACE) inhibitor). May contribute to the release of cortisol in the adrenals. Involved in one of the detoxification systems on the choroid plexus (CP), removes substrates such as E1S or taurocholate (TC), PCG, 2,4-D and PAH, from the cerebrospinal fluid (CSF) to the blood for eventual excretion in urine and bile. Also contributes to the uptake of several other organic compounds such as the prostanoids prostaglandin E(2) and prostaglandin F(2-alpha), L-carnitine, and the therapeutic drugs allopurinol, 6-mercaptopurine (6-MP) and 5-fluorouracil (5-FU). Mediates the transport of PAH, PCG, and the statins pravastatin and pitavastatin, from the cerebrum into the blood circulation across the blood-brain barrier (BBB). In summary, plays a role in the efflux of drugs and xenobiotics, helping reduce their undesired toxicological effects on the body. This chain is Organic anion transporter 3 (SLC22A8), found in Pongo abelii (Sumatran orangutan).